The following is a 485-amino-acid chain: Regulatory protein ViaA (485 aa).

The protein belongs to the ViaA family. As to quaternary structure, homodimer. Interacts with RavA.

The protein localises to the cytoplasm. Component of the RavA-ViaA chaperone complex, which may act on the membrane to optimize the function of some of the respiratory chains. ViaA stimulates the ATPase activity of RavA. The chain is Regulatory protein ViaA from Proteus mirabilis (strain HI4320).